A 242-amino-acid chain; its full sequence is Biosynthetic peptidoglycan transglycosylase (242 aa).

The chain crosses the membrane as a helical span at residues 19-39 (LMVVLAVFWGGGIALFSVAPV).

It belongs to the glycosyltransferase 51 family.

The protein resides in the cell inner membrane. The catalysed reaction is [GlcNAc-(1-&gt;4)-Mur2Ac(oyl-L-Ala-gamma-D-Glu-L-Lys-D-Ala-D-Ala)](n)-di-trans,octa-cis-undecaprenyl diphosphate + beta-D-GlcNAc-(1-&gt;4)-Mur2Ac(oyl-L-Ala-gamma-D-Glu-L-Lys-D-Ala-D-Ala)-di-trans,octa-cis-undecaprenyl diphosphate = [GlcNAc-(1-&gt;4)-Mur2Ac(oyl-L-Ala-gamma-D-Glu-L-Lys-D-Ala-D-Ala)](n+1)-di-trans,octa-cis-undecaprenyl diphosphate + di-trans,octa-cis-undecaprenyl diphosphate + H(+). Its pathway is cell wall biogenesis; peptidoglycan biosynthesis. In terms of biological role, peptidoglycan polymerase that catalyzes glycan chain elongation from lipid-linked precursors. The polypeptide is Biosynthetic peptidoglycan transglycosylase (Escherichia coli O157:H7).